The sequence spans 325 residues: Putative gluconeogenesis factor (325 aa).

It belongs to the gluconeogenesis factor family.

The protein localises to the cytoplasm. Functionally, required for morphogenesis under gluconeogenic growth conditions. The protein is Putative gluconeogenesis factor of Streptococcus pyogenes serotype M3 (strain ATCC BAA-595 / MGAS315).